The sequence spans 239 residues: Large ribosomal subunit protein uL1 (239 aa).

It belongs to the universal ribosomal protein uL1 family. As to quaternary structure, part of the 50S ribosomal subunit.

Its function is as follows. Binds directly to 23S rRNA. The L1 stalk is quite mobile in the ribosome, and is involved in E site tRNA release. Protein L1 is also a translational repressor protein, it controls the translation of the L11 operon by binding to its mRNA. The chain is Large ribosomal subunit protein uL1 from Rickettsia bellii (strain OSU 85-389).